The sequence spans 249 residues: MRILISNDDGVNSPGLAALYAALADYTECVVIAPDQDKSGASSSLTLDRPLHPQTLANGFISLNGTPTDCVHLGIHGLLEREPEMVVSGINLGANLGDDVLYSGTVAAALEGRFLQRPSFAFSFLSRQPDNLATAAHYARLLVEAHEQFDLPPRTVLNVNIPNLPLEHIRGIQLTRLGHRARAAAPVKVVDPRGRAGYWIAAAGDVEDGGAGTDFHAVVQGYVSITPLQLDRTYQDGFSSLNNWLEGRR.

Residues Asp-8, Asp-9, Ser-39, and Asn-91 each coordinate a divalent metal cation.

The protein belongs to the SurE nucleotidase family. A divalent metal cation is required as a cofactor.

The protein resides in the cytoplasm. The enzyme catalyses a ribonucleoside 5'-phosphate + H2O = a ribonucleoside + phosphate. Its function is as follows. Nucleotidase that shows phosphatase activity on nucleoside 5'-monophosphates. The polypeptide is 5'-nucleotidase SurE (Pseudomonas syringae pv. tomato (strain ATCC BAA-871 / DC3000)).